A 140-amino-acid chain; its full sequence is Putative pre-16S rRNA nuclease (140 aa).

The protein belongs to the YqgF nuclease family.

It is found in the cytoplasm. In terms of biological role, could be a nuclease involved in processing of the 5'-end of pre-16S rRNA. The protein is Putative pre-16S rRNA nuclease of Halothermothrix orenii (strain H 168 / OCM 544 / DSM 9562).